The sequence spans 578 residues: Proline--tRNA ligase (578 aa).

This sequence belongs to the class-II aminoacyl-tRNA synthetase family. ProS type 1 subfamily. Homodimer.

It is found in the cytoplasm. It carries out the reaction tRNA(Pro) + L-proline + ATP = L-prolyl-tRNA(Pro) + AMP + diphosphate. Its function is as follows. Catalyzes the attachment of proline to tRNA(Pro) in a two-step reaction: proline is first activated by ATP to form Pro-AMP and then transferred to the acceptor end of tRNA(Pro). As ProRS can inadvertently accommodate and process non-cognate amino acids such as alanine and cysteine, to avoid such errors it has two additional distinct editing activities against alanine. One activity is designated as 'pretransfer' editing and involves the tRNA(Pro)-independent hydrolysis of activated Ala-AMP. The other activity is designated 'posttransfer' editing and involves deacylation of mischarged Ala-tRNA(Pro). The misacylated Cys-tRNA(Pro) is not edited by ProRS. The polypeptide is Proline--tRNA ligase (Paraburkholderia xenovorans (strain LB400)).